The chain runs to 208 residues: Thymidylate kinase (208 aa).

10–17 (GGEGAGKS) serves as a coordination point for ATP.

It belongs to the thymidylate kinase family.

The catalysed reaction is dTMP + ATP = dTDP + ADP. Phosphorylation of dTMP to form dTDP in both de novo and salvage pathways of dTTP synthesis. This is Thymidylate kinase from Alcanivorax borkumensis (strain ATCC 700651 / DSM 11573 / NCIMB 13689 / SK2).